We begin with the raw amino-acid sequence, 394 residues long: MYKTFLIKYAEIAIKGKNRYIFEDALVKNIKYQLRNVDGSFEVRKESGRVYVETDGDYDYDETVATLSRIFGIVGICPVELHEDEGFDKLCEAVIEHINHVYKDKSFTFKVNARRARKNYPMTSMEINAAVGEKVLEAFPETRVDVHNPQVMINIEIRPMINIYSEEIPGPGGMPLGTAGKAMLLLSGGIDSPVAGYMIAKRGVVINATYFHAPPYTSERAKQKVVDLAKKVARYSGRIKLHVVNFTDIQLAIYEKCPHDELTIIMRRYMMKIAEHFADEDKCLGLITGESIGQVASQTMQSLAATNEVCHMPVYRPLIAMDKNDIIDISNKIDTYETSILPYEDCCTIFVAKHPVTKPNINRIKKSEERLNDVIDELMKTAIDTTEVIMVDAE.

The THUMP domain occupies 61 to 168 (DETVATLSRI…PMINIYSEEI (108 aa)). ATP-binding positions include 185–186 (LL), 210–211 (YF), Arg-267, Gly-289, and Gln-298.

It belongs to the ThiI family.

Its subcellular location is the cytoplasm. It carries out the reaction [ThiI sulfur-carrier protein]-S-sulfanyl-L-cysteine + a uridine in tRNA + 2 reduced [2Fe-2S]-[ferredoxin] + ATP + H(+) = [ThiI sulfur-carrier protein]-L-cysteine + a 4-thiouridine in tRNA + 2 oxidized [2Fe-2S]-[ferredoxin] + AMP + diphosphate. It catalyses the reaction [ThiS sulfur-carrier protein]-C-terminal Gly-Gly-AMP + S-sulfanyl-L-cysteinyl-[cysteine desulfurase] + AH2 = [ThiS sulfur-carrier protein]-C-terminal-Gly-aminoethanethioate + L-cysteinyl-[cysteine desulfurase] + A + AMP + 2 H(+). Its pathway is cofactor biosynthesis; thiamine diphosphate biosynthesis. In terms of biological role, catalyzes the ATP-dependent transfer of a sulfur to tRNA to produce 4-thiouridine in position 8 of tRNAs, which functions as a near-UV photosensor. Also catalyzes the transfer of sulfur to the sulfur carrier protein ThiS, forming ThiS-thiocarboxylate. This is a step in the synthesis of thiazole, in the thiamine biosynthesis pathway. The sulfur is donated as persulfide by IscS. The chain is Probable tRNA sulfurtransferase from Agathobacter rectalis (strain ATCC 33656 / DSM 3377 / JCM 17463 / KCTC 5835 / VPI 0990) (Eubacterium rectale).